The primary structure comprises 1090 residues: Vinculin (1090 aa).

2 consecutive repeat copies span residues 339–446 (DADN…SQNS) and 455–561 (QNAQ…DLGD). Positions 339–561 (DADNVTVMRK…LKNALRDLGD (223 aa)) are 2 X repeats. Disordered stretches follow at residues 811 to 842 (GVPMSNGRHSSYQESISRASPYNPPPPSSQVI) and 864 to 895 (DIPAPPRPPPPVELSPPPRPPPPPEYDEEEET). A compositionally biased stretch (polar residues) spans 817-830 (GRHSSYQESISRAS). The segment covering 866 to 887 (PAPPRPPPPVELSPPPRPPPPP) has biased composition (pro residues).

Belongs to the vinculin/alpha-catenin family. In terms of assembly, may interact with sorb-1. Expressed in gonadal sheath cells and the spermatheca. Expressed in body wall muscles.

The protein resides in the cytoplasm. Its subcellular location is the cytoskeleton. It is found in the cell junction. The protein localises to the adherens junction. It localises to the cell membrane. The protein resides in the focal adhesion. Its function is as follows. Involved in cell adhesion. May be involved in the attachment of the actin-based microfilaments to the plasma membrane. Involved in ovulation. This is Vinculin from Caenorhabditis elegans.